The sequence spans 292 residues: Undecaprenyl-diphosphatase (292 aa).

7 helical membrane passes run 1-21, 46-66, 90-110, 114-134, 192-212, 225-245, and 253-273; these read MSLV…FLPV, FVTI…RADI, LGWY…LLEH, ALGN…LLAA, FLLS…STVP, VVGT…LLAW, and VFVV…LSGV.

Belongs to the UppP family.

Its subcellular location is the cell inner membrane. It carries out the reaction di-trans,octa-cis-undecaprenyl diphosphate + H2O = di-trans,octa-cis-undecaprenyl phosphate + phosphate + H(+). Catalyzes the dephosphorylation of undecaprenyl diphosphate (UPP). Confers resistance to bacitracin. The protein is Undecaprenyl-diphosphatase of Anaeromyxobacter sp. (strain K).